The primary structure comprises 420 residues: Meiotically up-regulated gene 137 protein (420 aa).

The 223-residue stretch at N10–I232 folds into the BAR domain. An SH3 domain is found at K279–D345. Residues S398 to K420 are disordered.

The protein resides in the cytoplasm. It is found in the nucleus. Has a role in meiosis and sporulation. This Schizosaccharomyces pombe (strain 972 / ATCC 24843) (Fission yeast) protein is Meiotically up-regulated gene 137 protein (mug137).